Consider the following 393-residue polypeptide: Putative B3 domain-containing protein Os06g0632500 (393 aa).

3 DNA-binding regions (TF-B3) span residues 27–123, 141–238, and 316–393; these read LSVP…FDPG, RPRF…FLQN, and NSFT…VQRR.

It is found in the nucleus. The sequence is that of Putative B3 domain-containing protein Os06g0632500 from Oryza sativa subsp. japonica (Rice).